Reading from the N-terminus, the 248-residue chain is Probable transcriptional regulatory protein Ecaj_0351 (248 aa).

The segment at 1 to 21 is disordered; sequence MAGHSQFANIKHRKGAQDAKR.

The protein belongs to the TACO1 family.

The protein localises to the cytoplasm. The polypeptide is Probable transcriptional regulatory protein Ecaj_0351 (Ehrlichia canis (strain Jake)).